A 306-amino-acid polypeptide reads, in one-letter code: Leucine-rich repeat-containing protein 75B (306 aa).

Residues 1–22 (MGARLGRRARADAPAAPSAGPA) form a disordered region. Positions 12–22 (DAPAAPSAGPA) are enriched in low complexity. LRR repeat units follow at residues 173-186 (LVVLDLSFTELSDE) and 198-211 (LPRLTQLLLNGNRL).

The protein belongs to the LRRC75 family.

Functionally, may suppress myogenic differentiation by modulating MYOG expression and Erk1/2 signaling. This chain is Leucine-rich repeat-containing protein 75B, found in Mus musculus (Mouse).